The chain runs to 363 residues: DNA replication and repair protein RecF (363 aa).

Gly-33 to Thr-40 contacts ATP.

The protein belongs to the RecF family.

Its subcellular location is the cytoplasm. Its function is as follows. The RecF protein is involved in DNA metabolism; it is required for DNA replication and normal SOS inducibility. RecF binds preferentially to single-stranded, linear DNA. It also seems to bind ATP. This Tropheryma whipplei (strain TW08/27) (Whipple's bacillus) protein is DNA replication and repair protein RecF.